A 191-amino-acid chain; its full sequence is MARILVIFHSITGNTMKLAKAVADGAREGGAEVAVKRVPETIPAEILEKNPGYVKVREELESFEVARPEELQDYDAIIFGSPTRFGVMSSQMKQFIDMTGRLWMERRLEGKVGAVFTSNEMPHGGKEATLLSMLLPLFAHGMIIVGLPPAKELYRAGSYYGAASTGVPKEDDLQVAKMLGKRVAEVAEKLC.

The region spanning 4–184 (ILVIFHSITG…VAKMLGKRVA (181 aa)) is the Flavodoxin-like domain. FMN contacts are provided by residues 10–15 (SITGNT), 83–85 (TRF), and 118–124 (SNEMPHG).

The protein belongs to the WrbA family. Homodimer and homotetramer; in equilibrium. The cofactor is FMN.

It catalyses the reaction a quinone + NADH + H(+) = a quinol + NAD(+). It carries out the reaction a quinone + NADPH + H(+) = a quinol + NADP(+). Its function is as follows. It seems to function in response to environmental stress when various electron transfer chains are affected or when the environment is highly oxidizing. It reduces quinones to the hydroquinone state to prevent interaction of the semiquinone with O2 and production of superoxide. It prefers NADH over NADPH. This chain is NAD(P)H dehydrogenase (quinone), found in Archaeoglobus fulgidus (strain ATCC 49558 / DSM 4304 / JCM 9628 / NBRC 100126 / VC-16).